Reading from the N-terminus, the 479-residue chain is Anaerobic nitric oxide reductase flavorubredoxin (479 aa).

The tract at residues 30–210 is zinc metallo-hydrolase; sequence LRGSSYNSYL…PFSRLVTPKI (181 aa). Fe cation contacts are provided by histidine 79, glutamate 81, aspartate 83, histidine 147, aspartate 166, and histidine 227. The Flavodoxin-like domain maps to 254–393; that stretch reads ITIFYDTMSN…LCREHGREIA (140 aa). FMN contacts are provided by residues 260–264 and 342–369; these read TMSNN and AFGS…EMSL. The 52-residue stretch at 423–474 folds into the Rubredoxin-like domain; it reads GPRMQCSVCQWIYDPAKGEPMQDVAPGTPWSEVPDNFLCPECSLGKDVFEEL. Cysteine 428, cysteine 431, cysteine 461, and cysteine 464 together coordinate Fe cation.

In the N-terminal section; belongs to the zinc metallo-hydrolase group 3 family. Homotetramer. Fe cation is required as a cofactor. It depends on FMN as a cofactor.

It is found in the cytoplasm. The protein operates within nitrogen metabolism; nitric oxide reduction. Anaerobic nitric oxide reductase; uses NADH to detoxify nitric oxide (NO), protecting several 4Fe-4S NO-sensitive enzymes. Has at least 2 reductase partners, only one of which (NorW, flavorubredoxin reductase) has been identified. NO probably binds to the di-iron center; electrons enter from the NorW at rubredoxin and are transferred sequentially to the FMN center and the di-iron center. Also able to function as an aerobic oxygen reductase. The sequence is that of Anaerobic nitric oxide reductase flavorubredoxin from Shigella dysenteriae serotype 1 (strain Sd197).